We begin with the raw amino-acid sequence, 224 residues long: MEQYKQEFIEFMVESNVLTFGDFITKSGRRTPFFINTGNYKTGNQLNKLAKFYAKAIYDNFGDDFDILFGPAYKGIPLSVSVAMALDNIYGINAAYCSNRKEVKDHGDKGILLGAKLEEGDRVIIVEDVTTAGTSVYETMPILKSQAEVDVKGIIISVDRMERGKGDKSALTELKEKFGFKTCSIVTMEEVVEYLYKKNINGKVIIDDKMKDRINEYYKEYGVK.

5-phospho-alpha-D-ribose 1-diphosphate is bound by residues Lys26, 73–74 (YK), Arg100, Lys101, Lys104, His106, and 127–135 (EDVTTAGTS). Residues Thr131 and Arg160 each contribute to the orotate site.

The protein belongs to the purine/pyrimidine phosphoribosyltransferase family. PyrE subfamily. In terms of assembly, homodimer. Mg(2+) serves as cofactor.

The enzyme catalyses orotidine 5'-phosphate + diphosphate = orotate + 5-phospho-alpha-D-ribose 1-diphosphate. It participates in pyrimidine metabolism; UMP biosynthesis via de novo pathway; UMP from orotate: step 1/2. Functionally, catalyzes the transfer of a ribosyl phosphate group from 5-phosphoribose 1-diphosphate to orotate, leading to the formation of orotidine monophosphate (OMP). This is Orotate phosphoribosyltransferase from Clostridium acetobutylicum (strain ATCC 824 / DSM 792 / JCM 1419 / IAM 19013 / LMG 5710 / NBRC 13948 / NRRL B-527 / VKM B-1787 / 2291 / W).